The primary structure comprises 1028 residues: Kinesin-like protein KIF28 (1028 aa).

In terms of domain architecture, Kinesin motor spans 11 to 358 (SVRVAVRVRP…LRYAERAKKV (348 aa)). Position 114–121 (114–121 (GQTGSGKS)) interacts with ATP. In terms of domain architecture, FHA spans 460-523 (CDVGRAASNA…LQHLDRIILG (64 aa)). Positions 873–902 (NQVPELYQKLLKLEQETELLRDVNRALRGE) form a coiled coil.

The protein belongs to the TRAFAC class myosin-kinesin ATPase superfamily. Kinesin family.

It is found in the mitochondrion membrane. Microtubule-dependent motor protein required for mitochondrion morphology and transport of mitochondria in neuronal cells. The sequence is that of Kinesin-like protein KIF28 from Mus musculus (Mouse).